The following is a 422-amino-acid chain: Serine--tRNA ligase (422 aa).

230–232 contacts L-serine; the sequence is TAE. Residue 261–263 coordinates ATP; the sequence is RNE. Glutamate 284 lines the L-serine pocket. Residue 347–350 participates in ATP binding; the sequence is EVSS. Residue serine 383 participates in L-serine binding.

This sequence belongs to the class-II aminoacyl-tRNA synthetase family. Type-1 seryl-tRNA synthetase subfamily. In terms of assembly, homodimer. The tRNA molecule binds across the dimer.

The protein localises to the cytoplasm. The catalysed reaction is tRNA(Ser) + L-serine + ATP = L-seryl-tRNA(Ser) + AMP + diphosphate + H(+). The enzyme catalyses tRNA(Sec) + L-serine + ATP = L-seryl-tRNA(Sec) + AMP + diphosphate + H(+). Its pathway is aminoacyl-tRNA biosynthesis; selenocysteinyl-tRNA(Sec) biosynthesis; L-seryl-tRNA(Sec) from L-serine and tRNA(Sec): step 1/1. In terms of biological role, catalyzes the attachment of serine to tRNA(Ser). Is also able to aminoacylate tRNA(Sec) with serine, to form the misacylated tRNA L-seryl-tRNA(Sec), which will be further converted into selenocysteinyl-tRNA(Sec). The chain is Serine--tRNA ligase from Herpetosiphon aurantiacus (strain ATCC 23779 / DSM 785 / 114-95).